Here is a 980-residue protein sequence, read N- to C-terminus: MSSGCRSVGGSTWGNWRGDGGDLRQRRVLSPVCSAPAAGSWIGSQLGNVGNLLATPHPLGKPASSRVGTIVLACLLLFGSCVVRAVPTTPSPPTSTPTSMSTHSHGTVDPTLLPTETPDPLRLAVRESGILAEDGDFYTCPPPTGSTVVRIEPPRTCPKFDLGRNFTEGIAVIFKENIAPYKFRANVYYKDIVVTRVWKGYSHTSLSDRYNDRVPVSVEEIFGLIDSKGKCSSKAEYLRDNIMHHAYHDDEDEVELDLVPSKFATPGARAWQTTNDTTSYVGWMPWRHYTSTSVNCIVEEVEARSVYPYDSFALSTGDIVYASPFYGLRAAARIEHNSYAQERFRQVEGYRPRDLDSKLQAEEPVTKNFITTPHVTVSWNWTEKKVEACTLTKWKEVDELVRDEFRGSYRFTIRSISSTFISNTTQFKLESAPLTECVSKEAKEAIDSIYKKQYESTHVFSGDVEYYLARGGFLIAFRPMLSNELARLYLNELVRSNRTYDLKNLLNPNANNNNNTTRRRRSLLSVPEPQPTQDGVHREQILHRLHKRAVEATAGTDSSNVTAKQLELIKTTSSIEFAMLQFAYDHIQSHVNEMLSRIATAWCTLQNKERTLWNEMVKINPSAIVSATLDERVAARVLGDVIAITHCAKIEGNVYLQNSMRSMDSNTCYSRPPVTFTITKNANNRGSIEGQLGEENEIFTERKLIEPCALNQKRYFKFGKEYVYYENYTFVRKVPPTEIEVISTYVELNLTLLEDREFLPLEVYTRAELEDTGLLDYSEIQRRNQLHALRFYDIDSVVNVDNTAVIMQGIASFFKGLGKVGEAVGTLVLGAAGAVVSTVSGIASFLNNPFGGLAIGLLVIAGLVAAFFAYRYVMQIRSNPMKALYPITTKALKNKAKTSYGQNEEDDGSDFDEAKLEEAREMIKYMSMVSALEKQEKKAIKKNSGVGLIASNVSKLALRRRGPKYTRLQQNDTMENEKMV.

Over residues 1-14 (MSSGCRSVGGSTWG) the composition is skewed to polar residues. Disordered regions lie at residues 1–20 (MSSG…RGDG) and 88–118 (TTPS…TETP). The first 86 residues, 1–86 (MSSGCRSVGG…LFGSCVVRAV (86 aa)), serve as a signal peptide directing secretion. Residues 87-849 (PTTPSPPTST…SGIASFLNNP (763 aa)) lie on the Virion surface side of the membrane. Over residues 96–118 (TPTSMSTHSHGTVDPTLLPTETP) the composition is skewed to low complexity. Cystine bridges form between Cys140–Cys647, Cys157–Cys603, Cys231–Cys296, Cys389–Cys437, and Cys668–Cys708. An N-linked (GlcNAc...) asparagine; by host glycan is attached at Asn165. The interval 197–203 (VWKGYSH) is involved in fusion and/or binding to host membrane. Asn275 is a glycosylation site (N-linked (GlcNAc...) asparagine; by host). The segment at 282–290 (GWMPWRHYT) is involved in fusion and/or binding to host membrane. N-linked (GlcNAc...) asparagine; by host glycosylation is found at Asn380, Asn423, Asn497, Asn514, Asn515, and Asn560. Residues 505 to 516 (LLNPNANNNNNT) are compositionally biased toward low complexity. The tract at residues 505–535 (LLNPNANNNNNTTRRRRSLLSVPEPQPTQDG) is disordered. 2 N-linked (GlcNAc...) asparagine; by host glycosylation sites follow: Asn727 and Asn749. Hydrophobic membrane proximal region regions lie at residues 794-847 (IDSV…SFLN) and 823-843 (AVGT…SGIA). Residues 850 to 870 (FGGLAIGLLVIAGLVAAFFAY) traverse the membrane as a helical segment. Topologically, residues 871 to 980 (RYVMQIRSNP…NDTMENEKMV (110 aa)) are intravirion. Residues 925 to 928 (YMSM) carry the Golgi targeting motif. Residues 965–968 (YTRL) carry the Internalization motif motif.

The protein belongs to the herpesviridae glycoprotein B family. As to quaternary structure, homotrimer; disulfide-linked. Binds to heparan sulfate proteoglycans. Interacts with gH/gL heterodimer. In terms of processing, a proteolytic cleavage by host furin generates two subunits that remain linked by disulfide bonds.

The protein localises to the virion membrane. The protein resides in the host cell membrane. Its subcellular location is the host endosome membrane. It localises to the host Golgi apparatus membrane. Envelope glycoprotein that forms spikes at the surface of virion envelope. Essential for the initial attachment to heparan sulfate moieties of the host cell surface proteoglycans. Involved in fusion of viral and cellular membranes leading to virus entry into the host cell. Following initial binding to its host receptors, membrane fusion is mediated by the fusion machinery composed at least of gB and the heterodimer gH/gL. May be involved in the fusion between the virion envelope and the outer nuclear membrane during virion egress. The chain is Envelope glycoprotein B from Equus caballus (Horse).